Here is a 310-residue protein sequence, read N- to C-terminus: Glutaminase (310 aa).

7 residues coordinate substrate: S66, N117, E161, N168, Y192, Y244, and V262. K294 is modified (N6-acetyllysine).

It belongs to the glutaminase family. As to quaternary structure, homotetramer.

It catalyses the reaction L-glutamine + H2O = L-glutamate + NH4(+). The polypeptide is Glutaminase (Escherichia coli O81 (strain ED1a)).